Here is a 736-residue protein sequence, read N- to C-terminus: 1,4-alpha-glucan branching enzyme GlgB 2 (736 aa).

Asp415 functions as the Nucleophile in the catalytic mechanism. Residue Glu468 is the Proton donor of the active site.

It belongs to the glycosyl hydrolase 13 family. GlgB subfamily. As to quaternary structure, monomer.

It catalyses the reaction Transfers a segment of a (1-&gt;4)-alpha-D-glucan chain to a primary hydroxy group in a similar glucan chain.. Its pathway is glycan biosynthesis; glycogen biosynthesis. Its function is as follows. Catalyzes the formation of the alpha-1,6-glucosidic linkages in glycogen by scission of a 1,4-alpha-linked oligosaccharide from growing alpha-1,4-glucan chains and the subsequent attachment of the oligosaccharide to the alpha-1,6 position. The polypeptide is 1,4-alpha-glucan branching enzyme GlgB 2 (Rhizobium johnstonii (strain DSM 114642 / LMG 32736 / 3841) (Rhizobium leguminosarum bv. viciae)).